A 515-amino-acid chain; its full sequence is Maturase K (515 aa).

It belongs to the intron maturase 2 family. MatK subfamily.

It localises to the plastid. It is found in the chloroplast. Usually encoded in the trnK tRNA gene intron. Probably assists in splicing its own and other chloroplast group II introns. This Pinus armandii (Chinese white pine) protein is Maturase K.